A 74-amino-acid polypeptide reads, in one-letter code: Large ribosomal subunit protein bL31 (74 aa).

The Zn(2+) site is built by cysteine 16, cysteine 18, cysteine 37, and cysteine 40.

This sequence belongs to the bacterial ribosomal protein bL31 family. Type A subfamily. In terms of assembly, part of the 50S ribosomal subunit. Zn(2+) serves as cofactor.

In terms of biological role, binds the 23S rRNA. This Nitrosomonas europaea (strain ATCC 19718 / CIP 103999 / KCTC 2705 / NBRC 14298) protein is Large ribosomal subunit protein bL31.